The following is a 367-amino-acid chain: Aminomethyltransferase (367 aa).

This sequence belongs to the GcvT family. As to quaternary structure, the glycine cleavage system is composed of four proteins: P, T, L and H.

The catalysed reaction is N(6)-[(R)-S(8)-aminomethyldihydrolipoyl]-L-lysyl-[protein] + (6S)-5,6,7,8-tetrahydrofolate = N(6)-[(R)-dihydrolipoyl]-L-lysyl-[protein] + (6R)-5,10-methylene-5,6,7,8-tetrahydrofolate + NH4(+). In terms of biological role, the glycine cleavage system catalyzes the degradation of glycine. This Mycolicibacterium paratuberculosis (strain ATCC BAA-968 / K-10) (Mycobacterium paratuberculosis) protein is Aminomethyltransferase.